The primary structure comprises 347 residues: Biotin synthase (347 aa).

A Radical SAM core domain is found at 40–258; that stretch reads AQVQVSTLLS…IAVARIVMPR (219 aa). The [4Fe-4S] cluster site is built by cysteine 55, cysteine 59, and cysteine 62. 4 residues coordinate [2Fe-2S] cluster: cysteine 99, cysteine 130, cysteine 190, and arginine 262.

This sequence belongs to the radical SAM superfamily. Biotin synthase family. In terms of assembly, homodimer. [4Fe-4S] cluster serves as cofactor. Requires [2Fe-2S] cluster as cofactor.

The catalysed reaction is (4R,5S)-dethiobiotin + (sulfur carrier)-SH + 2 reduced [2Fe-2S]-[ferredoxin] + 2 S-adenosyl-L-methionine = (sulfur carrier)-H + biotin + 2 5'-deoxyadenosine + 2 L-methionine + 2 oxidized [2Fe-2S]-[ferredoxin]. Its pathway is cofactor biosynthesis; biotin biosynthesis; biotin from 7,8-diaminononanoate: step 2/2. Catalyzes the conversion of dethiobiotin (DTB) to biotin by the insertion of a sulfur atom into dethiobiotin via a radical-based mechanism. This is Biotin synthase from Stenotrophomonas maltophilia (strain R551-3).